The sequence spans 260 residues: LOB domain-containing protein 6 (260 aa).

In terms of domain architecture, LOB spans 32–133; the sequence is SPCAACKFLR…QDLARAKYEL (102 aa).

This sequence belongs to the LOB domain-containing protein family. In terms of assembly, interacts with RS2. In terms of tissue distribution, expressed in leaves, leaf primordia, immature ears, immature tassels, whole ovules, silk and husk leaves. Found on the adaxial side of organs.

The protein resides in the nucleus. In terms of biological role, promotes the switch from proliferation to differentiation in the embryo sac. Negative regulator of cell proliferation in the adaxial side of leaves. Regulates the formation of a symmetric lamina and the establishment of venation. Interacts directly with RS2 (rough sheath 2) to repress some knox homeobox genes. This is LOB domain-containing protein 6 (LBD6) from Zea mays (Maize).